Reading from the N-terminus, the 526-residue chain is Organic cation/carnitine transporter 4 (526 aa).

The Cytoplasmic segment spans residues 1-52 (MESPEDRNGNDVRQPLLEKIPVKKEAEGEERLCIDEMLQRYCGEFGRWQLKH). Residues 53–73 (FVLTCIAWALEAFHTMVMIFA) traverse the membrane as a helical segment. Over 74–123 (DQEPEWRCVGSDCRVGSLNCELDPSSWEWTAGKGSSTVSEWGLICGDKYK) the chain is Extracellular. The helical transmembrane segment at 124–144 (VGLVQALFFAGCMIGAGVFGH) threads the bilayer. The Cytoplasmic portion of the chain corresponds to 145–153 (LSDSKLGRK). A helical membrane pass occupies residues 154-174 (GSLTVVCIINAIFGIATAFSP). Topologically, residues 175 to 179 (NYWTY) are extracellular. The chain crosses the membrane as a helical span at residues 180-200 (VVLRFLTGFSTGGVGLTAFVL). Position 201 to 208 (201 to 208 (ATEPIGPS)) interacts with ATP. The Cytoplasmic portion of the chain corresponds to 201–214 (ATEPIGPSKRGVAG). Residues 215–235 (MSTFYFFSAGIAVLSGIAYVF) form a helical membrane-spanning segment. Over 236–240 (RSWRE) the chain is Extracellular. The chain crosses the membrane as a helical span at residues 241-261 (LFIVSSLPSLLFLLIVIPFIS). At 262-331 (ESPRWYLVRG…ILSPLMRMRL (70 aa)) the chain is on the cytoplasmic side. Residues 332 to 352 (VISVAISFTVSIVYYGLSLNV) traverse the membrane as a helical segment. Over 353–360 (GNLKTNLY) the chain is Extracellular. A helical membrane pass occupies residues 361-381 (LNVFVNAVSEMPAFAITAVLL). Over 382-390 (DKYGRKPLS) the chain is Cytoplasmic. Residues 391-411 (IGTQWFSCVFCLVGFSVWGAG) form a helical membrane-spanning segment. Residues 412–418 (PWKSVRM) are Extracellular-facing. A helical transmembrane segment spans residues 419 to 439 (VSGVLGIFGMAGTYNLLFIYI). The Cytoplasmic segment spans residues 440–451 (AELFPTVVRNAA). Residues 452-472 (LGCATQAAQMGAILAPFVVVL) traverse the membrane as a helical segment. At 473–475 (GEE) the chain is on the extracellular side. A helical transmembrane segment spans residues 476-496 (LPFGVFAVCGLVGGGLAFYLP). Over 497–526 (ETLNKPLYDTMFGMHEAESESNRERGEVIC) the chain is Cytoplasmic.

It belongs to the major facilitator (TC 2.A.1) superfamily. Organic cation transporter (TC 2.A.1.19) family. As to expression, mostly expressed in siliques, and, to a lower extent, in stems, leaves, flowers and siliques. Present in pollen. In the stems of secondary inflorescences present in the phloem cells and xylem parenchyma cells.

The protein localises to the vacuole membrane. In terms of biological role, high affinity carnitine transporter involved in the active cellular uptake of carnitine. Also transports organic cations. The sequence is that of Organic cation/carnitine transporter 4 (OCT4) from Arabidopsis thaliana (Mouse-ear cress).